Consider the following 637-residue polypeptide: MVTVTLPDGSVRPFEGPVTVAEVASSIGAGLAKAALAGKVDGKLVDTSYVIDADAQLAIVTAKDAEALDLIRHDAAHVMAQAVQELYPGTQVTIGPAIEDGFYYDFAREQPFTPEDLEKIEKRMDEIVKRDLPIRREVWSRDEAMKVFGDLGETYKVQIIDEVIPKGEELSIYRQGEWFDVCRGPHLPSTGKLPRAFKLMKLAGAYWRGDSKNAMLQRIYGTAWAKKEDLEAYLHRLEEAEKRDHRRLAKQLDLLHMQDEAPGMVFWHPKGWIVWQQIEQYMREKFVEYGYQEVRTPAVMDRSMWEKSGHWENYRDNMFTTASENRDYAVKPMNCPGHVQIFNSGLHSYRDLPLRLAEFGSCHRNEPSGALHGIMRVRGFTQDDAHIFCMEEQVEQEVADFIVMLQKVYADFGFNDVLVKLSTRPDKRVGSDESWDKAESALAAALEKNGLSFDLQPGEGAFYGPKIEFTLKDTLGRLWQCGTIQLDFNLPVRLGAEFVAEDNTRKIPVMLHRAILGSMERFIGILIEHHAGNFPLWLAPVQVMVMNISERQAAYAEAVAEALRRAGIRAALDLSNNKINYKIREHSLQKLPYQLVVGDKEMEARVVAVRARGNQDMGQLGLDDLIARLRAEVLARQ.

The 61-residue stretch at 1 to 61 (MVTVTLPDGS…DADAQLAIVT (61 aa)) folds into the TGS domain. The catalytic stretch occupies residues 244-535 (DHRRLAKQLD…LIEHHAGNFP (292 aa)). Zn(2+) is bound by residues Cys-335, His-386, and His-512.

Belongs to the class-II aminoacyl-tRNA synthetase family. Homodimer. Zn(2+) serves as cofactor.

The protein resides in the cytoplasm. The catalysed reaction is tRNA(Thr) + L-threonine + ATP = L-threonyl-tRNA(Thr) + AMP + diphosphate + H(+). Catalyzes the attachment of threonine to tRNA(Thr) in a two-step reaction: L-threonine is first activated by ATP to form Thr-AMP and then transferred to the acceptor end of tRNA(Thr). Also edits incorrectly charged L-seryl-tRNA(Thr). The polypeptide is Threonine--tRNA ligase (Thiobacillus denitrificans (strain ATCC 25259 / T1)).